The chain runs to 342 residues: Transcription initiation factor TFIID subunit 12 (342 aa).

Residues 1-221 (MKMEEFSPPT…QAPPPQMIPA (221 aa)) are disordered. Residues 12 to 35 (PNNHVIVQANPQIAAALSTNSPMQ) show a composition bias toward polar residues. 4 stretches are compositionally biased toward low complexity: residues 39 to 59 (PPQG…VGQP), 67 to 89 (PMRM…QMRA), 96 to 146 (QQQQ…HLMG), and 180 to 192 (QQIM…QQHQ). Residues 193–218 (QPPPSQQIQQPPIPQPQQQQAPPPQM) are compositionally biased toward pro residues. Residues 230-297 (EKSKLDDLMQ…EFILKNVYNM (68 aa)) enclose the Histone-fold domain.

This sequence belongs to the TAF12 family. Interacts (via histone-fold domain) with taf-4 (via the histone-fold domain). Interaction may facilitate the nuclear localization of taf-4.

The protein localises to the nucleus. Its function is as follows. Part of the general transcription factor complex TFIID. Plays a role in recruiting taf-4 to the nucleus and thereby activating transcription initiation by RNA polymerase II, as part of the TFIID complex. The protein is Transcription initiation factor TFIID subunit 12 of Caenorhabditis elegans.